A 45-amino-acid polypeptide reads, in one-letter code: Natriuretic peptide OsNP-d (45 aa).

Positions 1-5 (PAAGL) are excised as a propeptide. Cys14 and Cys30 are oxidised to a cystine.

It belongs to the natriuretic peptide family. In terms of tissue distribution, expressed by the venom gland.

It localises to the secreted. Functionally, snake venom natriuretic peptide that targets both NPR1 and NPR2. Exhibits hypotensive and vasodepressor activities. The sequence is that of Natriuretic peptide OsNP-d from Oxyuranus scutellatus scutellatus (Australian taipan).